Reading from the N-terminus, the 311-residue chain is Porphobilinogen deaminase (311 aa).

C241 carries the S-(dipyrrolylmethanemethyl)cysteine modification.

It belongs to the HMBS family. In terms of assembly, monomer. Dipyrromethane serves as cofactor.

It catalyses the reaction 4 porphobilinogen + H2O = hydroxymethylbilane + 4 NH4(+). It functions in the pathway porphyrin-containing compound metabolism; protoporphyrin-IX biosynthesis; coproporphyrinogen-III from 5-aminolevulinate: step 2/4. In terms of biological role, tetrapolymerization of the monopyrrole PBG into the hydroxymethylbilane pre-uroporphyrinogen in several discrete steps. The sequence is that of Porphobilinogen deaminase from Shouchella clausii (strain KSM-K16) (Alkalihalobacillus clausii).